A 169-amino-acid polypeptide reads, in one-letter code: ATP synthase subunit b (169 aa).

Residues T14–F34 traverse the membrane as a helical segment.

It belongs to the ATPase B chain family. In terms of assembly, F-type ATPases have 2 components, F(1) - the catalytic core - and F(0) - the membrane proton channel. F(1) has five subunits: alpha(3), beta(3), gamma(1), delta(1), epsilon(1). F(0) has four main subunits: a(1), b(2) and c(10-14). The alpha and beta chains form an alternating ring which encloses part of the gamma chain. F(1) is attached to F(0) by a central stalk formed by the gamma and epsilon chains, while a peripheral stalk is formed by the delta and b chains.

The protein localises to the cell membrane. F(1)F(0) ATP synthase produces ATP from ADP in the presence of a proton or sodium gradient. F-type ATPases consist of two structural domains, F(1) containing the extramembraneous catalytic core and F(0) containing the membrane proton channel, linked together by a central stalk and a peripheral stalk. During catalysis, ATP synthesis in the catalytic domain of F(1) is coupled via a rotary mechanism of the central stalk subunits to proton translocation. In terms of biological role, component of the F(0) channel, it forms part of the peripheral stalk, linking F(1) to F(0). The polypeptide is ATP synthase subunit b (Heliobacterium modesticaldum (strain ATCC 51547 / Ice1)).